Consider the following 141-residue polypeptide: ATP synthase epsilon chain (141 aa).

The protein belongs to the ATPase epsilon chain family. In terms of assembly, F-type ATPases have 2 components, CF(1) - the catalytic core - and CF(0) - the membrane proton channel. CF(1) has five subunits: alpha(3), beta(3), gamma(1), delta(1), epsilon(1). CF(0) has three main subunits: a, b and c.

Its subcellular location is the cell inner membrane. Its function is as follows. Produces ATP from ADP in the presence of a proton gradient across the membrane. This chain is ATP synthase epsilon chain, found in Burkholderia ambifaria (strain ATCC BAA-244 / DSM 16087 / CCUG 44356 / LMG 19182 / AMMD) (Burkholderia cepacia (strain AMMD)).